The sequence spans 169 residues: CKLF-like MARVEL transmembrane domain-containing protein 1 (169 aa).

Residues 17 to 135 (NLKQPETAAA…DAFVVTTKMR (119 aa)) enclose the MARVEL domain. 4 consecutive transmembrane segments (helical) span residues 22–42 (ETAA…ITQA), 46–66 (FITI…IYVL), 79–99 (LLDL…AILA), and 110–130 (YVGG…AFVV).

This sequence belongs to the chemokine-like factor family. As to expression, highly expressed in testis.

The protein resides in the membrane. The polypeptide is CKLF-like MARVEL transmembrane domain-containing protein 1 (CMTM1) (Homo sapiens (Human)).